Here is a 649-residue protein sequence, read N- to C-terminus: MFSVTRRRAAGAAAAMATATGTLYWMTSQGDRPLVHNDPSYMVQFPTAAPPQVSRRDLLDRLAKTHQFDVLIIGGGATGTGCALDAATRGLNVALVEKGDFASGTSSKSTKMIHGGVRYLEKAFWEFSKAQLDLVIEALNERKHLINTAPHLCTVLPILIPIYSTWQVPYIYMGCKFYDFFAGSQNLKKSYLLSKSATVEKAPMLTTDNLKASLVYHDGSFNDSRLNATLAITAVENGATVLNYVEVQKLIKDPTSGKVIGAEARDVETNELVRINAKCVVNATGPYSDAILQMDRNPSGLPDSPLNDNSKIKSTFNQIAVMDPKMVIPSIGVHIVLPSFYCPKDMGLLDVRTSDGRVMFFLPWQGKVLAGTTDIPLKQVPENPMPTEADIQDILKELQHYIEFPVKREDVLSAWAGVRPLVRDPRTIPADGKKGSATQGVVRSHFLFTSDNGLITIAGGKWTTYRQMAEETVDKVVEVGGFHNLKPCHTRDIKLAGAEEWTQNYVALLAQNYHLSSKMSNYLVQNYGTRSSIICEFFKESMENKLPLSLADKENNVIYSSEENNLVNFDTFRYPFTIGELKYSMQYEYCRTPLDFLLRRTRFAFLDAKEALNAVHATVKVMGDEFNWSEKKRQWELEKTVNFIKTFGV.

Residue 69 to 97 participates in FAD binding; sequence DVLIIGGGATGTGCALDAATRGLNVALVE.

It belongs to the FAD-dependent glycerol-3-phosphate dehydrogenase family. The cofactor is FAD.

The protein localises to the mitochondrion inner membrane. The protein resides in the mitochondrion intermembrane space. It catalyses the reaction a quinone + sn-glycerol 3-phosphate = dihydroxyacetone phosphate + a quinol. Its pathway is polyol metabolism; glycerol degradation via glycerol kinase pathway; glycerone phosphate from sn-glycerol 3-phosphate (anaerobic route): step 1/1. This is Glycerol-3-phosphate dehydrogenase, mitochondrial (GUT2) from Saccharomyces cerevisiae (strain ATCC 204508 / S288c) (Baker's yeast).